The chain runs to 1293 residues: Phosphoribosylformylglycinamidine synthase (1293 aa).

ATP contacts are provided by residues 305–316 and alanine 676; that span reads GAATGSGGEIRD. The segment at 305–327 is disordered; sequence GAATGSGGEIRDEGATGRGSKPK. Mg(2+) is bound by residues aspartate 677, glutamate 716, asparagine 720, and aspartate 884. Serine 886 serves as a coordination point for ATP. Residues 1040–1293 enclose the Glutamine amidotransferase type-1 domain; the sequence is MAILREQGVN…MFRNARVNLG (254 aa). The active-site Nucleophile is cysteine 1133. Residues histidine 1258 and glutamate 1260 contribute to the active site.

The protein in the N-terminal section; belongs to the FGAMS family. As to quaternary structure, monomer.

It is found in the cytoplasm. It catalyses the reaction N(2)-formyl-N(1)-(5-phospho-beta-D-ribosyl)glycinamide + L-glutamine + ATP + H2O = 2-formamido-N(1)-(5-O-phospho-beta-D-ribosyl)acetamidine + L-glutamate + ADP + phosphate + H(+). Its pathway is purine metabolism; IMP biosynthesis via de novo pathway; 5-amino-1-(5-phospho-D-ribosyl)imidazole from N(2)-formyl-N(1)-(5-phospho-D-ribosyl)glycinamide: step 1/2. Phosphoribosylformylglycinamidine synthase involved in the purines biosynthetic pathway. Catalyzes the ATP-dependent conversion of formylglycinamide ribonucleotide (FGAR) and glutamine to yield formylglycinamidine ribonucleotide (FGAM) and glutamate. This is Phosphoribosylformylglycinamidine synthase from Shewanella sp. (strain MR-4).